A 355-amino-acid polypeptide reads, in one-letter code: Electron transfer flavoprotein subunit alpha, mitochondrial (355 aa).

295–323 (LYIAVGISGAIQHLAGMKDSKVIVAINKD) contacts FAD.

The protein belongs to the ETF alpha-subunit/FixB family. Heterodimer of an alpha and a beta subunit. It depends on FAD as a cofactor.

Its subcellular location is the mitochondrion matrix. Functionally, the electron transfer flavoprotein serves as a specific electron acceptor for several dehydrogenases, including five acyl-CoA dehydrogenases, glutaryl-CoA and sarcosine dehydrogenase. It transfers the electrons to the main mitochondrial respiratory chain via ETF-ubiquinone oxidoreductase (ETF dehydrogenase). In Dictyostelium discoideum (Social amoeba), this protein is Electron transfer flavoprotein subunit alpha, mitochondrial (etfa).